A 142-amino-acid polypeptide reads, in one-letter code: Hemoglobin subunit alpha (142 aa).

The residue at position 1 (S1) is an N-acetylserine. The Globin domain maps to 1-142; sequence SLSEKNKAAV…VALALADRYR (142 aa). Residue H59 coordinates O2. A heme b-binding site is contributed by H88.

It belongs to the globin family. Heterotetramer of two alpha chains and two beta chains. In terms of tissue distribution, red blood cells.

Functionally, involved in oxygen transport from gills to the various peripheral tissues. In Pagothenia borchgrevinki (Bald rockcod), this protein is Hemoglobin subunit alpha (hba).